The chain runs to 602 residues: Elongation factor 4 (602 aa).

Positions 7-190 constitute a tr-type G domain; it reads KHIRNFCIVA…AVVQKVPAPS (184 aa). GTP is bound by residues 19–24 and 137–140; these read DHGKST and NKID.

The protein belongs to the TRAFAC class translation factor GTPase superfamily. Classic translation factor GTPase family. LepA subfamily.

Its subcellular location is the cell membrane. It catalyses the reaction GTP + H2O = GDP + phosphate + H(+). In terms of biological role, required for accurate and efficient protein synthesis under certain stress conditions. May act as a fidelity factor of the translation reaction, by catalyzing a one-codon backward translocation of tRNAs on improperly translocated ribosomes. Back-translocation proceeds from a post-translocation (POST) complex to a pre-translocation (PRE) complex, thus giving elongation factor G a second chance to translocate the tRNAs correctly. Binds to ribosomes in a GTP-dependent manner. This chain is Elongation factor 4, found in Clostridium acetobutylicum (strain ATCC 824 / DSM 792 / JCM 1419 / IAM 19013 / LMG 5710 / NBRC 13948 / NRRL B-527 / VKM B-1787 / 2291 / W).